We begin with the raw amino-acid sequence, 71 residues long: Long neurotoxin 2 (71 aa).

5 disulfide bridges follow: cysteine 3–cysteine 20, cysteine 14–cysteine 41, cysteine 26–cysteine 30, cysteine 45–cysteine 56, and cysteine 57–cysteine 62.

This sequence belongs to the three-finger toxin family. Long-chain subfamily. Type II alpha-neurotoxin sub-subfamily. In terms of tissue distribution, expressed by the venom gland.

It is found in the secreted. Functionally, binds with high affinity to muscular (alpha-1/CHRNA1) and neuronal (alpha-7/CHRNA7) nicotinic acetylcholine receptor (nAChR) and inhibits acetylcholine from binding to the receptor, thereby impairing neuromuscular and neuronal transmission. This chain is Long neurotoxin 2, found in Naja naja (Indian cobra).